The primary structure comprises 478 residues: Spindle defective protein 3 (478 aa).

The Cytoplasmic segment spans residues 1–24; that stretch reads MDQMTVEEKILEHQELEDGSSSFR. A helical membrane pass occupies residues 25-45; sequence WLVSSTVIAIGGATVALYISG. Residues 46–52 are Extracellular-facing; sequence KIDWKIP. Residues 53–73 form a helical membrane-spanning segment; the sequence is AIEAGLALTAGGTITCGYLWF. Over 74–478 the chain is Cytoplasmic; sequence KKRVKTVRKL…LRRVDDDIIE (405 aa).

It localises to the mitochondrion. It is found in the mitochondrion outer membrane. Functionally, in the first mitotic division in embryos, required for mitotic spindle alignment and asymmetric cell division. Required for motor-driven chromosome movement and homolog searching within the nucleus, and subsequently ensures homologous chromosome pairing during the prophase stage of meiosis. This Caenorhabditis elegans protein is Spindle defective protein 3.